The following is a 281-amino-acid chain: ATP phosphoribosyltransferase (281 aa).

Belongs to the ATP phosphoribosyltransferase family. Long subfamily. Mg(2+) serves as cofactor.

The protein localises to the cytoplasm. The enzyme catalyses 1-(5-phospho-beta-D-ribosyl)-ATP + diphosphate = 5-phospho-alpha-D-ribose 1-diphosphate + ATP. It participates in amino-acid biosynthesis; L-histidine biosynthesis; L-histidine from 5-phospho-alpha-D-ribose 1-diphosphate: step 1/9. With respect to regulation, feedback inhibited by histidine. In terms of biological role, catalyzes the condensation of ATP and 5-phosphoribose 1-diphosphate to form N'-(5'-phosphoribosyl)-ATP (PR-ATP). Has a crucial role in the pathway because the rate of histidine biosynthesis seems to be controlled primarily by regulation of HisG enzymatic activity. This is ATP phosphoribosyltransferase from Corynebacterium diphtheriae (strain ATCC 700971 / NCTC 13129 / Biotype gravis).